The following is a 527-amino-acid chain: Light-independent protochlorophyllide reductase subunit B (527 aa).

Asp36 serves as a coordination point for [4Fe-4S] cluster. Residue Asp290 is the Proton donor of the active site. Residue 425–426 (GL) coordinates substrate.

Belongs to the ChlB/BchB/BchZ family. Protochlorophyllide reductase is composed of three subunits; ChlL, ChlN and ChlB. Forms a heterotetramer of two ChlB and two ChlN subunits. [4Fe-4S] cluster serves as cofactor.

The catalysed reaction is chlorophyllide a + oxidized 2[4Fe-4S]-[ferredoxin] + 2 ADP + 2 phosphate = protochlorophyllide a + reduced 2[4Fe-4S]-[ferredoxin] + 2 ATP + 2 H2O. It participates in porphyrin-containing compound metabolism; chlorophyll biosynthesis (light-independent). Functionally, component of the dark-operative protochlorophyllide reductase (DPOR) that uses Mg-ATP and reduced ferredoxin to reduce ring D of protochlorophyllide (Pchlide) to form chlorophyllide a (Chlide). This reaction is light-independent. The NB-protein (ChlN-ChlB) is the catalytic component of the complex. This is Light-independent protochlorophyllide reductase subunit B from Synechococcus sp. (strain RCC307).